The primary structure comprises 188 residues: Elongation factor P 1 (188 aa).

The protein belongs to the elongation factor P family.

The protein localises to the cytoplasm. Its pathway is protein biosynthesis; polypeptide chain elongation. In terms of biological role, involved in peptide bond synthesis. Stimulates efficient translation and peptide-bond synthesis on native or reconstituted 70S ribosomes in vitro. Probably functions indirectly by altering the affinity of the ribosome for aminoacyl-tRNA, thus increasing their reactivity as acceptors for peptidyl transferase. This chain is Elongation factor P 1 (efp1), found in Porphyromonas gingivalis (strain ATCC BAA-308 / W83).